A 297-amino-acid chain; its full sequence is tRNA-cytidine(32) 2-sulfurtransferase (297 aa).

A PP-loop motif motif is present at residues 61–66; sequence SGGKDS. [4Fe-4S] cluster contacts are provided by C136, C139, and C227.

This sequence belongs to the TtcA family. As to quaternary structure, homodimer. Mg(2+) serves as cofactor. It depends on [4Fe-4S] cluster as a cofactor.

The protein localises to the cytoplasm. It catalyses the reaction cytidine(32) in tRNA + S-sulfanyl-L-cysteinyl-[cysteine desulfurase] + AH2 + ATP = 2-thiocytidine(32) in tRNA + L-cysteinyl-[cysteine desulfurase] + A + AMP + diphosphate + H(+). It participates in tRNA modification. In terms of biological role, catalyzes the ATP-dependent 2-thiolation of cytidine in position 32 of tRNA, to form 2-thiocytidine (s(2)C32). The sulfur atoms are provided by the cysteine/cysteine desulfurase (IscS) system. This is tRNA-cytidine(32) 2-sulfurtransferase from Paracoccus denitrificans (strain Pd 1222).